We begin with the raw amino-acid sequence, 195 residues long: Thymidine kinase (195 aa).

ATP contacts are provided by residues 15–22 and 88–91; these read GSMFSGKS and DEVQ. Catalysis depends on glutamate 89, which acts as the Proton acceptor. Positions 145, 148, 183, and 186 each coordinate Zn(2+).

This sequence belongs to the thymidine kinase family. In terms of assembly, homotetramer.

It localises to the cytoplasm. The enzyme catalyses thymidine + ATP = dTMP + ADP + H(+). In Bacillus cereus (strain AH187), this protein is Thymidine kinase.